The sequence spans 449 residues: Rubisco accumulation factor 1.2, chloroplastic (449 aa).

The N-terminal 61 residues, 1-61, are a transit peptide targeting the chloroplast; that stretch reads MFSLKSLISS…NMIPKNPPAR (61 aa). The tract at residues 75–264 is N-terminal alpha-helix; that stretch reads IPTQFRSLDS…KAKNRLNTEL (190 aa). A coiled-coil region spans residues 262–288; that stretch reads TELYGDKEAEKEKEKKKKEEEVKAIRI. The C-terminal beta sheet stretch occupies residues 288-434; sequence IPVVRLKFGE…GMVVLVVRPP (147 aa).

The protein belongs to the RAF family. Homodimer.

It is found in the plastid. Its subcellular location is the chloroplast. Its function is as follows. Required for assembly or stability of RuBisCO. Acts at a postchaperonin step to fold and/or assemble the large subunit (rbcL) into RuBisCO. RAF1 brackets an rbcL dimer (rbcL(2)), leading to rbcL(8)-RAF1(4) complex formation. In the next step, RBCS displaces RAF1, thus resulting in holoenzyme formation. This is Rubisco accumulation factor 1.2, chloroplastic from Arabidopsis thaliana (Mouse-ear cress).